The chain runs to 963 residues: Iron-responsive element-binding protein 2 (963 aa).

Residues Cys512, Cys578, and Cys581 each coordinate [4Fe-4S] cluster.

Belongs to the aconitase/IPM isomerase family. Interacts with RBCK1 only in iron-rich conditions. Interacts (when associated with the 4Fe-4S) with FBXL5. Interacts with CIAO1 and CIAO2A. Requires [4Fe-4S] cluster as cofactor. In terms of processing, ubiquitinated and degraded by the proteasome in presence of high level of iron and oxygen. Ubiquitinated by a SCF complex containing FBXL5. Upon iron and oxygen depletion FBXL5 is degraded, preventing ubiquitination and allowing its RNA-binding activity. In terms of tissue distribution, ubiquitously expressed in rat tissues, the highest amounts present in skeletal muscle and heart.

The protein localises to the cytoplasm. Its function is as follows. RNA-binding protein that binds to iron-responsive elements (IRES), which are stem-loop structures found in the 5'-UTR of ferritin, and delta aminolevulinic acid synthase mRNAs, and in the 3'-UTR of transferrin receptor mRNA. Binding to the IRE element in ferritin results in the repression of its mRNA translation. Binding of the protein to the transferrin receptor mRNA inhibits the degradation of this otherwise rapidly degraded mRNA. The protein is Iron-responsive element-binding protein 2 (Ireb2) of Rattus norvegicus (Rat).